Reading from the N-terminus, the 650-residue chain is Acetyl-coenzyme A synthetase (650 aa).

CoA contacts are provided by residues 191–194 (RGGR), threonine 311, and asparagine 335. ATP contacts are provided by residues 387–389 (GEP), 411–416 (DTWWQT), aspartate 500, and arginine 515. Serine 523 serves as a coordination point for CoA. Arginine 526 is an ATP binding site. Positions 537, 539, and 542 each coordinate Mg(2+). Arginine 584 is a binding site for CoA. The residue at position 609 (lysine 609) is an N6-acetyllysine.

The protein belongs to the ATP-dependent AMP-binding enzyme family. Mg(2+) serves as cofactor. Acetylated. Deacetylation by the SIR2-homolog deacetylase activates the enzyme.

It carries out the reaction acetate + ATP + CoA = acetyl-CoA + AMP + diphosphate. Functionally, catalyzes the conversion of acetate into acetyl-CoA (AcCoA), an essential intermediate at the junction of anabolic and catabolic pathways. AcsA undergoes a two-step reaction. In the first half reaction, AcsA combines acetate with ATP to form acetyl-adenylate (AcAMP) intermediate. In the second half reaction, it can then transfer the acetyl group from AcAMP to the sulfhydryl group of CoA, forming the product AcCoA. The chain is Acetyl-coenzyme A synthetase from Shewanella sp. (strain W3-18-1).